The chain runs to 141 residues: Large ribosomal subunit protein uL11 (141 aa).

The protein belongs to the universal ribosomal protein uL11 family. Part of the ribosomal stalk of the 50S ribosomal subunit. Interacts with L10 and the large rRNA to form the base of the stalk. L10 forms an elongated spine to which L12 dimers bind in a sequential fashion forming a multimeric L10(L12)X complex. One or more lysine residues are methylated.

Its function is as follows. Forms part of the ribosomal stalk which helps the ribosome interact with GTP-bound translation factors. The polypeptide is Large ribosomal subunit protein uL11 (Maridesulfovibrio salexigens (strain ATCC 14822 / DSM 2638 / NCIMB 8403 / VKM B-1763) (Desulfovibrio salexigens)).